Consider the following 43-residue polypeptide: S-layer protein 1 (43 aa).

The protein resides in the secreted. Its subcellular location is the cell wall. The protein localises to the S-layer. Functionally, the S-layer is a paracrystalline mono-layered assembly of proteins which coat the surface of bacteria. In Bacillus thuringiensis subsp. konkukian, this protein is S-layer protein 1.